The following is a 253-amino-acid chain: 1-(5-phosphoribosyl)-5-[(5-phosphoribosylamino)methylideneamino] imidazole-4-carboxamide isomerase (253 aa).

Asp8 acts as the Proton acceptor in catalysis. Asp129 functions as the Proton donor in the catalytic mechanism.

This sequence belongs to the HisA/HisF family.

It localises to the cytoplasm. It catalyses the reaction 1-(5-phospho-beta-D-ribosyl)-5-[(5-phospho-beta-D-ribosylamino)methylideneamino]imidazole-4-carboxamide = 5-[(5-phospho-1-deoxy-D-ribulos-1-ylimino)methylamino]-1-(5-phospho-beta-D-ribosyl)imidazole-4-carboxamide. The protein operates within amino-acid biosynthesis; L-histidine biosynthesis; L-histidine from 5-phospho-alpha-D-ribose 1-diphosphate: step 4/9. This Microcystis aeruginosa (strain NIES-843 / IAM M-2473) protein is 1-(5-phosphoribosyl)-5-[(5-phosphoribosylamino)methylideneamino] imidazole-4-carboxamide isomerase.